The primary structure comprises 806 residues: MDFLDYQAYGVPLTGTDDELLPEPASNLSLLAASGPSVSELNTSIQGDSTPPLLNTDSNFNFEGKDNLHERMEMYSELTVKLLPIQPGLVRDIFEDVTPQSSDFQHLLKKGNNVTSAVLVKRLSHVLNDMNHPNYQSDLQLKKALMILQDNQGVLGLDGSKLVRPDFLGSLSRKTLRSQLEKELLKDHLATLENFQPIARRIMRLRQPVKNIQEISEKVLDAQEAQNKSPLQDPLVSEVREKLEMLKLKKRVLVGIRESLTLNQLEDEQLRNGEIEDSYLDVLDKMMEIKERSTYLIAMNYEKAGKALLGNINQYLQLANKRIYNYLLGFLYDYESNTKTFGERNFEGDNVGLSLFQRCLVYLSNDLEYFNDFMKKVTSMRSKKLLDEFLIPFVIDNNEGRSIILSAHDPARYLGDVLAHVHSLLANEGDFLKSLFKYQEERMADMTQSIFQKNKDILQSLHVNMLNDIMSTLSNSVRIRLEQIVRFEEEATVTFDISQLLSLYKLMFTKQGMLDDNKLVKVFDDLAVLAKTKTMNYYTEFLSEAVKEEPEVTDLLPPKWLSKYLSDLTALFDKINGSSEQTGIVDKNFFTKLVKTPCESTFLKQAELCFPLAKKDRRVKFDLLVLEINGLDMIVSRLGPYRTNIFSDEYGSEVYDSLKRSLDTLLGQLEVHQTRNILESTGLELYYNLFNMIFPVASVQDPLDYDMYLSAQENQIMKLETIETNIAQKLSDYLPKALLDVQDTWLLYLASPKFADDIASRSFHVFANFYVVFKSVLLNIFPDDHQRINSIFIYSEEEVKMLLGIN.

The protein belongs to the COG6 family.

It is found in the golgi apparatus membrane. Functionally, acts as a component of the peripheral membrane COG complex that is involved in intra-Golgi protein trafficking. COG is located at the cis-Golgi, and regulates tethering of retrograde intra-Golgi vesicles and possibly a number of other membrane trafficking events. The polypeptide is Conserved oligomeric Golgi complex subunit 6 (COG6) (Eremothecium gossypii (strain ATCC 10895 / CBS 109.51 / FGSC 9923 / NRRL Y-1056) (Yeast)).